A 251-amino-acid polypeptide reads, in one-letter code: Large ribosomal subunit protein uL3 (251 aa).

An N5-methylglutamine modification is found at glutamine 151. Residues 219-251 (PGAFRRNGEEAAAAPAAEAPAETPAEEAGQEGA) are disordered. Residues 228 to 241 (EAAAAPAAEAPAET) show a composition bias toward low complexity. The segment covering 242 to 251 (PAEEAGQEGA) has biased composition (acidic residues).

Belongs to the universal ribosomal protein uL3 family. As to quaternary structure, part of the 50S ribosomal subunit. Forms a cluster with proteins L14 and L19. Methylated by PrmB.

Its function is as follows. One of the primary rRNA binding proteins, it binds directly near the 3'-end of the 23S rRNA, where it nucleates assembly of the 50S subunit. In Parvibaculum lavamentivorans (strain DS-1 / DSM 13023 / NCIMB 13966), this protein is Large ribosomal subunit protein uL3.